A 203-amino-acid polypeptide reads, in one-letter code: Inosine triphosphate pyrophosphatase (203 aa).

13 to 18 (TGNAKK) contributes to the ITP binding site. Mg(2+) is bound at residue Glu43. ITP contacts are provided by residues Lys55, 71 to 72 (DT), Lys88, 147 to 150 (FGWD), Lys170, and 175 to 176 (HR).

It belongs to the HAM1 NTPase family. Homodimer. Mg(2+) serves as cofactor. Mn(2+) is required as a cofactor.

The protein resides in the cytoplasm. It carries out the reaction ITP + H2O = IMP + diphosphate + H(+). It catalyses the reaction dITP + H2O = dIMP + diphosphate + H(+). The enzyme catalyses XTP + H2O = XMP + diphosphate + H(+). The catalysed reaction is N(6)-hydroxy-dATP + H2O = N(6)-hydroxy-dAMP + diphosphate + H(+). Pyrophosphatase that hydrolyzes the non-canonical purine nucleotides inosine triphosphate (ITP), deoxyinosine triphosphate (dITP) as well as 2'-deoxy-N-6-hydroxylaminopurine triphosphate (dHAPTP) and xanthosine 5'-triphosphate (XTP) to their respective monophosphate derivatives. The enzyme does not distinguish between the deoxy- and ribose forms. Probably excludes non-canonical purines from RNA and DNA precursor pools, thus preventing their incorporation into RNA and DNA and avoiding chromosomal lesions. This is Inosine triphosphate pyrophosphatase (itpa) from Danio rerio (Zebrafish).